Here is a 60-residue protein sequence, read N- to C-terminus: Large ribosomal subunit protein bL32 (60 aa).

A disordered region spans residues 1 to 43; the sequence is MAVQQNKKSPSKRGMHRSHDALTNPPLAIEPTTGEIHLRHHIS.

The protein belongs to the bacterial ribosomal protein bL32 family.

The chain is Large ribosomal subunit protein bL32 from Nitrosomonas europaea (strain ATCC 19718 / CIP 103999 / KCTC 2705 / NBRC 14298).